The following is a 380-amino-acid chain: uncharacterized protein (380 aa).

2 HTH tetR-type domains span residues 3–63 (ESAE…KEGL) and 201–262 (VRTR…CAEI). Positions 225 to 244 (TISDITRKSNIRRATFYDHY) form a DNA-binding region, H-T-H motif.

This is an uncharacterized protein from Bacillus subtilis (strain 168).